The primary structure comprises 103 residues: Large ribosomal subunit protein bL21 (103 aa).

It belongs to the bacterial ribosomal protein bL21 family. In terms of assembly, part of the 50S ribosomal subunit. Contacts protein L20.

In terms of biological role, this protein binds to 23S rRNA in the presence of protein L20. The sequence is that of Large ribosomal subunit protein bL21 from Mycobacteroides abscessus (strain ATCC 19977 / DSM 44196 / CCUG 20993 / CIP 104536 / JCM 13569 / NCTC 13031 / TMC 1543 / L948) (Mycobacterium abscessus).